The chain runs to 83 residues: Large ribosomal subunit protein bL27c (83 aa).

The interval 1–21 (MAHKKGAGSTKNGRDSNAKRL) is disordered.

This sequence belongs to the bacterial ribosomal protein bL27 family.

Its subcellular location is the plastid. The protein localises to the chloroplast. The chain is Large ribosomal subunit protein bL27c from Phaeodactylum tricornutum (strain CCAP 1055/1).